Here is a 289-residue protein sequence, read N- to C-terminus: Polyketide biosynthesis malonyl CoA-acyl carrier protein transacylase BaeC (289 aa).

Catalysis depends on residues S87 and H193.

This sequence belongs to the FabD family.

Its subcellular location is the cytoplasm. The catalysed reaction is holo-[ACP] + malonyl-CoA = malonyl-[ACP] + CoA. It functions in the pathway antibiotic biosynthesis; bacillaene biosynthesis. In terms of biological role, involved in some intermediate steps for the synthesis of the antibiotic polyketide bacillaene which is involved in secondary metabolism. It catalyzes the transfer of the malonyl-CoA group to the acyl-carrier-protein AcpK (Mal-AcpK). The polypeptide is Polyketide biosynthesis malonyl CoA-acyl carrier protein transacylase BaeC (baeC) (Bacillus velezensis (strain DSM 23117 / BGSC 10A6 / LMG 26770 / FZB42) (Bacillus amyloliquefaciens subsp. plantarum)).